The following is a 218-amino-acid chain: Very-long-chain (3R)-3-hydroxyacyl-CoA dehydratase (218 aa).

The Cytoplasmic portion of the chain corresponds to 1–6 (MKTYLS). A helical transmembrane segment spans residues 7-29 (IYYLIQFCGHSWIFTNMTTRFLF). Residues 30–38 (FGQDAFADT) lie on the Lumenal side of the membrane. The chain crosses the membrane as a helical span at residues 39-61 (FYSIGLVMQGCQLLSILELAHIL). Topologically, residues 62–67 (LGVEQN) are cytoplasmic. The chain crosses the membrane as a helical span at residues 68–87 (GFLPMFLQVAERFIILFVVI). The Lumenal segment spans residues 88 to 96 (TSQEEVQSK). A helical membrane pass occupies residues 97 to 116 (YIVCALFFIWNLWDVIRYPY). Residues 117–136 (DMLAAVDTDYSALTWLRHTW) are Cytoplasmic-facing. The chain crosses the membrane as a helical span at residues 137 to 159 (WIVAYPLSVLAEAYTIYESLPYF). Active-site residues include Y141 and E148. Residues 160–178 (ESLGTYSFKMALPVSLSFH) are Lumenal-facing. Residues 179–201 (FPYILTLYLVLQPVGMLYICSCL) traverse the membrane as a helical segment. At 202 to 218 (WSERKQYFQRKLKLKKN) the chain is on the cytoplasmic side.

This sequence belongs to the very long-chain fatty acids dehydratase HACD family.

The protein localises to the endoplasmic reticulum membrane. It carries out the reaction a very-long-chain (3R)-3-hydroxyacyl-CoA = a very-long-chain (2E)-enoyl-CoA + H2O. The enzyme catalyses (3R)-hydroxyhexadecanoyl-CoA = (2E)-hexadecenoyl-CoA + H2O. The protein operates within lipid metabolism; fatty acid biosynthesis. Its function is as follows. Catalyzes the third of the four reactions of the long-chain fatty acids elongation cycle. This endoplasmic reticulum-bound enzymatic process, allows the addition of two carbons to the chain of long- and very long-chain fatty acids/VLCFAs per cycle. This enzyme catalyzes the dehydration of the 3-hydroxyacyl-CoA intermediate into trans-2,3-enoyl-CoA, within each cycle of fatty acid elongation. Thereby, it participates in the production of VLCFAs of different chain lengths that are involved in multiple biological processes as precursors of membrane lipids and lipid mediators. This Xenopus laevis (African clawed frog) protein is Very-long-chain (3R)-3-hydroxyacyl-CoA dehydratase.